An 87-amino-acid chain; its full sequence is Translation initiation factor IF-1 1 (87 aa).

The region spanning 1–72 is the S1-like domain; that stretch reads MAKEELLELD…TKGRINFRHK (72 aa). Residues 68-87 are disordered; that stretch reads NFRHKDANSPRPPRTGQPRR. Residues 77 to 87 are compositionally biased toward pro residues; sequence PRPPRTGQPRR.

The protein belongs to the IF-1 family. As to quaternary structure, component of the 30S ribosomal translation pre-initiation complex which assembles on the 30S ribosome in the order IF-2 and IF-3, IF-1 and N-formylmethionyl-tRNA(fMet); mRNA recruitment can occur at any time during PIC assembly.

The protein resides in the cytoplasm. In terms of biological role, one of the essential components for the initiation of protein synthesis. Stabilizes the binding of IF-2 and IF-3 on the 30S subunit to which N-formylmethionyl-tRNA(fMet) subsequently binds. Helps modulate mRNA selection, yielding the 30S pre-initiation complex (PIC). Upon addition of the 50S ribosomal subunit IF-1, IF-2 and IF-3 are released leaving the mature 70S translation initiation complex. This is Translation initiation factor IF-1 1 from Burkholderia lata (strain ATCC 17760 / DSM 23089 / LMG 22485 / NCIMB 9086 / R18194 / 383).